The primary structure comprises 409 residues: F-box/kelch-repeat protein At1g48625 (409 aa).

The F-box domain occupies Ala-2–Met-49. Kelch repeat units follow at residues Phe-169 to Asn-218 and Trp-221 to Cys-266.

The protein is F-box/kelch-repeat protein At1g48625 of Arabidopsis thaliana (Mouse-ear cress).